We begin with the raw amino-acid sequence, 154 residues long: Large ribosomal subunit protein uL15 (154 aa).

A compositionally biased stretch (basic and acidic residues) spans M1–R13. The disordered stretch occupies residues M1–G52.

Belongs to the universal ribosomal protein uL15 family. As to quaternary structure, part of the 50S ribosomal subunit.

In terms of biological role, binds to the 23S rRNA. This chain is Large ribosomal subunit protein uL15, found in Deinococcus deserti (strain DSM 17065 / CIP 109153 / LMG 22923 / VCD115).